Consider the following 350-residue polypeptide: Hydroxymethylglutaryl-CoA synthase (350 aa).

Catalysis depends on Glu83, which acts as the Proton donor/acceptor. Cys115 acts as the Acyl-thioester intermediate in catalysis. Cys115 and Thr156 together coordinate (3S)-3-hydroxy-3-methylglutaryl-CoA. Arg204 contributes to the CoA binding site. (3S)-3-hydroxy-3-methylglutaryl-CoA contacts are provided by Thr206 and His239. His239 functions as the Proton donor/acceptor in the catalytic mechanism. CoA is bound at residue Lys244. Positions 271 and 301 each coordinate (3S)-3-hydroxy-3-methylglutaryl-CoA.

The protein belongs to the thiolase-like superfamily. Archaeal HMG-CoA synthase family. In terms of assembly, interacts with acetoacetyl-CoA thiolase that catalyzes the precedent step in the pathway and with a DUF35 protein. The acetoacetyl-CoA thiolase/HMG-CoA synthase complex channels the intermediate via a fused CoA-binding site, which allows for efficient coupling of the endergonic thiolase reaction with the exergonic HMGCS reaction.

It carries out the reaction acetoacetyl-CoA + acetyl-CoA + H2O = (3S)-3-hydroxy-3-methylglutaryl-CoA + CoA + H(+). Its pathway is metabolic intermediate biosynthesis; (R)-mevalonate biosynthesis; (R)-mevalonate from acetyl-CoA: step 2/3. In terms of biological role, catalyzes the condensation of acetyl-CoA with acetoacetyl-CoA to form 3-hydroxy-3-methylglutaryl-CoA (HMG-CoA). Functions in the mevalonate (MVA) pathway leading to isopentenyl diphosphate (IPP), a key precursor for the biosynthesis of isoprenoid compounds that are building blocks of archaeal membrane lipids. The polypeptide is Hydroxymethylglutaryl-CoA synthase (Thermococcus sibiricus (strain DSM 12597 / MM 739)).